Consider the following 538-residue polypeptide: Phosphoenolpyruvate carboxykinase (ATP) (538 aa).

Substrate is bound by residues arginine 61, tyrosine 195, and lysine 201. Residues lysine 201, histidine 220, and 236–244 (GLSGTGKTT) contribute to the ATP site. Positions 201 and 220 each coordinate Mn(2+). Mn(2+) is bound at residue aspartate 257. Glutamate 285, arginine 323, and threonine 449 together coordinate ATP. Position 323 (arginine 323) interacts with substrate.

Belongs to the phosphoenolpyruvate carboxykinase (ATP) family. It depends on Mn(2+) as a cofactor.

The protein resides in the cytoplasm. The catalysed reaction is oxaloacetate + ATP = phosphoenolpyruvate + ADP + CO2. Its pathway is carbohydrate biosynthesis; gluconeogenesis. In terms of biological role, involved in the gluconeogenesis. Catalyzes the conversion of oxaloacetate (OAA) to phosphoenolpyruvate (PEP) through direct phosphoryl transfer between the nucleoside triphosphate and OAA. The chain is Phosphoenolpyruvate carboxykinase (ATP) from Nitrobacter winogradskyi (strain ATCC 25391 / DSM 10237 / CIP 104748 / NCIMB 11846 / Nb-255).